The sequence spans 132 residues: Small ribosomal subunit protein uS8c (132 aa).

This sequence belongs to the universal ribosomal protein uS8 family. In terms of assembly, part of the 30S ribosomal subunit.

The protein localises to the plastid. Its subcellular location is the chloroplast. One of the primary rRNA binding proteins, it binds directly to 16S rRNA central domain where it helps coordinate assembly of the platform of the 30S subunit. The chain is Small ribosomal subunit protein uS8c (rps8) from Zygnema circumcarinatum (Green alga).